A 483-amino-acid polypeptide reads, in one-letter code: Probable 4-aminobutyrate aminotransferase, mitochondrial (483 aa).

148–149 is a pyridoxal 5'-phosphate binding site; sequence GT. Arginine 204 serves as a coordination point for substrate. Lysine 341 is modified (N6-(pyridoxal phosphate)lysine). Position 365 (threonine 365) interacts with pyridoxal 5'-phosphate.

The protein belongs to the class-III pyridoxal-phosphate-dependent aminotransferase family. Homodimer. The cofactor is pyridoxal 5'-phosphate.

Its subcellular location is the mitochondrion matrix. It catalyses the reaction 4-aminobutanoate + 2-oxoglutarate = succinate semialdehyde + L-glutamate. The catalysed reaction is (S)-3-amino-2-methylpropanoate + 2-oxoglutarate = 2-methyl-3-oxopropanoate + L-glutamate. The chain is Probable 4-aminobutyrate aminotransferase, mitochondrial (gta-1) from Caenorhabditis elegans.